Consider the following 115-residue polypeptide: Con-Ins T1A (115 aa).

Residues 1 to 24 (MTTSFYFLLMALGLLLYVCQSSFG) form the signal peptide. Positions 25-29 (NQHTR) are excised as a propeptide. At P34 the chain carries 4-hydroxyproline; partial. Disulfide bonds link C38-C101, C50-C114, and C100-C105. E41 is modified (4-carboxyglutamate). Residues 53 to 94 (KRNDAGKKRGRASPLWQRGGSLSMLKARAKRNEAFHLQRAHR) constitute a propeptide, c peptide. Position 98 is a 4-carboxyglutamate (E98). P104 bears the 4-hydroxyproline; partial mark. E109 is subject to 4-carboxyglutamate; partial. C114 carries the post-translational modification Cysteine amide.

This sequence belongs to the insulin family. In terms of assembly, heterodimer of A and B chains; disulfide-linked. As to expression, expressed by the venom gland.

It localises to the secreted. This venom insulin, from a fish-hunting cone snail, facilitates prey capture by rapidly inducing hypoglycemic shock. It is one of the smallest known insulin found in nature and lacks the C-terminal segment of the B chain that, in human insulin, mediates engagement of the insulin receptor (INSR) and assembly of the hormone's hexameric storage form. Despite lacking this segment, it both binds and activates human insulin receptor (long isoform (HIR-B)) with a high potency (EC(50)=12.0 nM). In vivo, intraperitoneal injection of this peptide into zebrafish lowers blood glucose with a lower potency than human insulin. In addition, when applied to water, this peptide reduces overall locomotor activity of zebrafish larvae, observed as a significant decrease in the percentage of time spent swimming and movement frequency. When tested on a mouse model of diabetes, this insulin also lowers blood glucose with a 10-fold lower potency than human insulin. This chain is Con-Ins T1A, found in Conus tulipa (Fish-hunting cone snail).